We begin with the raw amino-acid sequence, 407 residues long: Peptide chain release factor subunit 1 (407 aa).

This sequence belongs to the eukaryotic release factor 1 family. In terms of assembly, heterodimer of two subunits, one of which binds GTP.

It localises to the cytoplasm. In terms of biological role, directs the termination of nascent peptide synthesis (translation) in response to the termination codons UAA, UAG and UGA. This is Peptide chain release factor subunit 1 (prf1) from Archaeoglobus fulgidus (strain ATCC 49558 / DSM 4304 / JCM 9628 / NBRC 100126 / VC-16).